Here is a 138-residue protein sequence, read N- to C-terminus: Large ribosomal subunit protein uL13 (138 aa).

Belongs to the universal ribosomal protein uL13 family. In terms of assembly, part of the 50S ribosomal subunit.

In terms of biological role, this protein is one of the early assembly proteins of the 50S ribosomal subunit, although it is not seen to bind rRNA by itself. It is important during the early stages of 50S assembly. This is Large ribosomal subunit protein uL13 from Picrophilus torridus (strain ATCC 700027 / DSM 9790 / JCM 10055 / NBRC 100828 / KAW 2/3).